The primary structure comprises 56 residues: uncharacterized protein (56 aa).

Residues Ile-33–Ile-53 traverse the membrane as a helical segment.

The protein localises to the host membrane. This is an uncharacterized protein from Bos taurus (Bovine).